Here is a 60-residue protein sequence, read N- to C-terminus: Homeobox protein engrailed-like B (60 aa).

A DNA-binding region (homeobox) is located at residues 1–41; that stretch reads VEQLQRLKSEFGASRYLTEARRQALAQELRLNEAQIKIWFQ.

Belongs to the engrailed homeobox family.

It localises to the nucleus. This chain is Homeobox protein engrailed-like B, found in Myxine glutinosa (Atlantic hagfish).